Consider the following 691-residue polypeptide: Germ cell nuclear acidic protein (691 aa).

The SUMO interaction motif 1 (SIM) signature appears at 22-25 (ILNV). The disordered stretch occupies residues 25 to 488 (VQSSSDDTSG…GAAKVEKRKT (464 aa)). Positions 27–36 (SSSDDTSGSS) are enriched in low complexity. Residues 48–63 (CILNVQSRSGDTSGSS) show a composition bias toward polar residues. 3 consecutive short sequence motifs (SUMO interaction motif 1 (SIM)) follow at residues 76–79 (VVVI), 97–100 (LLEI), and 121–124 (IVIS). Basic and acidic residues predominate over residues 86-97 (ECHTHEEKKAKL). Positions 124 to 333 (SDDDNDDDNG…VPDDNSDDLE (210 aa)) are enriched in acidic residues. Over residues 467-488 (GHKKRGPSKKKPGAAKVEKRKT) the composition is skewed to basic residues. Residues 522-677 (VQRIYDLFNR…AKCKGSLVMV (156 aa)) enclose the SprT-like domain.

Belongs to the serine-aspartate repeat-containing protein (SDr) family. As to quaternary structure, interacts (via SIM domains) with SUMO2; this interaction allows the GCNA recruitment to DPCs sites. Interacts with TOP2A; this interaction allows the resolution of topoisomerase II (TOP2A) DNA-protein cross-links. In terms of tissue distribution, expressed in germ cells of the testis (at protein level). Detected in skeletal muscle, liver, kidney, pancreas, heart, lung and brain. Expressed throughout spermatogenesis, from spermatogonia to elongated spermatids, in normal adult testis (at protein level).

The protein localises to the nucleus. It is found in the PML body. It localises to the chromosome. Its function is as follows. May play a role in DNA-protein cross-links (DPCs) clearance through a SUMO-dependent recruitment to sites of DPCs, ensuring the genomic stability by protecting germ cells and early embryos from various sources of damage. Can resolve the topoisomerase II (TOP2A) DPCs. This chain is Germ cell nuclear acidic protein, found in Homo sapiens (Human).